The sequence spans 346 residues: Porphobilinogen deaminase (346 aa).

At Cys242 the chain carries S-(dipyrrolylmethanemethyl)cysteine. Residues Ala317–Gln346 are disordered. The segment covering Asp335 to Gln346 has biased composition (polar residues).

It belongs to the HMBS family. In terms of assembly, monomer. Requires dipyrromethane as cofactor.

The catalysed reaction is 4 porphobilinogen + H2O = hydroxymethylbilane + 4 NH4(+). Its pathway is porphyrin-containing compound metabolism; protoporphyrin-IX biosynthesis; coproporphyrinogen-III from 5-aminolevulinate: step 2/4. In terms of biological role, tetrapolymerization of the monopyrrole PBG into the hydroxymethylbilane pre-uroporphyrinogen in several discrete steps. The polypeptide is Porphobilinogen deaminase (Nocardia farcinica (strain IFM 10152)).